The chain runs to 396 residues: Flap endonuclease 1 (396 aa).

Positions 1–105 (MGIHGLTKLL…DQLAQRTERR (105 aa)) are N-domain. Aspartate 34 is a Mg(2+) binding site. Position 71 (arginine 71) interacts with DNA. The Mg(2+) site is built by aspartate 87, glutamate 159, glutamate 161, aspartate 180, and aspartate 182. The segment at 123 to 254 (AIEKYSKRSV…VRALQMIKKH (132 aa)) is I-domain. A DNA-binding site is contributed by glutamate 159. The DNA site is built by glycine 232 and aspartate 234. Aspartate 234 is a Mg(2+) binding site. Residues 338–346 (NQGRLESFF) form an interaction with PCNA region. The segment at 341–396 (RLESFFTSLPKPATADKAKPKEDDKKRKAGAAAGGKDAKGGAAAKKGKFGVGGGKK) is disordered. Over residues 354–366 (TADKAKPKEDDKK) the composition is skewed to basic and acidic residues. The span at 370–384 (GAAAGGKDAKGGAAA) shows a compositional bias: low complexity.

It belongs to the XPG/RAD2 endonuclease family. FEN1 subfamily. Interacts with PCNA. Three molecules of FEN1 bind to one PCNA trimer with each molecule binding to one PCNA monomer. PCNA stimulates the nuclease activity without altering cleavage specificity. It depends on Mg(2+) as a cofactor. Post-translationally, phosphorylated. Phosphorylation upon DNA damage induces relocalization to the nuclear plasma.

The protein localises to the nucleus. It is found in the nucleolus. Its subcellular location is the nucleoplasm. It localises to the mitochondrion. Structure-specific nuclease with 5'-flap endonuclease and 5'-3' exonuclease activities involved in DNA replication and repair. During DNA replication, cleaves the 5'-overhanging flap structure that is generated by displacement synthesis when DNA polymerase encounters the 5'-end of a downstream Okazaki fragment. It enters the flap from the 5'-end and then tracks to cleave the flap base, leaving a nick for ligation. Also involved in the long patch base excision repair (LP-BER) pathway, by cleaving within the apurinic/apyrimidinic (AP) site-terminated flap. Acts as a genome stabilization factor that prevents flaps from equilibrating into structures that lead to duplications and deletions. Also possesses 5'-3' exonuclease activity on nicked or gapped double-stranded DNA, and exhibits RNase H activity. Also involved in replication and repair of rDNA and in repairing mitochondrial DNA. The protein is Flap endonuclease 1 of Chlamydomonas reinhardtii (Chlamydomonas smithii).